A 1572-amino-acid chain; its full sequence is MPEVRDWRQLAKTRLEYELLTNELFHLWEFTSLVEYDPLFRNTSNSFKTFLQERGLDVESSLEQDDMKESNASRRLKRRNVISGTADSSSDKNNIWGQVMPLVDQEYSELQEKLRASVCGRRGRKRTQQVASVPAESEEDVAVPRPNKKRQTVVTAQGSAQNKLNTPVVSSPKKSLKQTADKKSKLNKRDSSTNDISVESEDPPVKDITNTGQGKSKARLKSSKAKSKKRAVKSQTELVRKQSPEIKNESKRTKADPTHTNDDGNDNRKTNNKSKNIINNNESGLKTSLNTTGDIIDDEEYYFTSSSEDDDNEKPRTALQKKSLPNRLKVKLHVNAPRQTITNPLHVLKPEYADVHSFLQSYKSLDEDVSLEEYDSYIKEQRKTAKLIRIGFERGAIKYDPQTDSLQSLSLRDVMPPSNAAEPISVYYKEQSKHTFQDHLVNQGIVLSKSFQDSRRSQIAKARRVAQIIESHFKHIAGAEERKLKEEEKRKKNLARFAMQAVKKRWTMAEKAYKVLKKDELDQLERIQGKQHLTEMLEQSTQLLGAQLNQLDSCTYPSEASDASSEFSANEESDGNSDIDDEMMSTSSCDSDKEGNTERIGNDMELSVEELRSKYAQLNKINDFGNETSKSAADESIFDEASDSVSDSMEDSLSSSESETEDADASAQEDTPGLSALLGNIDENEEDVEADVNFDADSSSDDGLDGDSSGAENNSKTEELPSPPKSDNELKDEKAETTESVTSPAAADPLAVSDVPVPSLLRGTLRIYQKQGLNWLASLYNNKTNGILADEMGLGKTIQTISLLAYLACEKENWGPHLIVVPTSVLLNWEMEFKRFAPGFKVLTYYGSPQQRREKRKGWNKPDAFHVCITSYQLVVHDQHSFKRKKWQYMILDEAHNIKNFRSTRWQALLNFNTERRLLLTGTPLQNNLAELWSLLYFLMPQTALENGKVSGFADLDAFQQWFGRPVDKIVETGENYEQDEETKKTVSKLHQVLRPYLLRRLKADVEKQMPGKYEHIIYCRLSKRQRFLYDDFMSRAQTKETLASGNFMSIINCLMQLRKVCNHPDLFEVRPILTSFCIEDSVSKSYCDLNNYVYNRLHENQFETSVDLSNLNFQFTSNDKTLSTNHSEKISELQCVQPILKEISRLKQLNENDSPVTQPDFQDLNQYYSYAKHNKINEIIGQLEHLNYMNNLRCNRRPMYGSNIVKLLTVGPKKFIDCELTQESIKPLETRLLEGKETIEKFAVITPPVVTLDIRERAVGVDDNNKRFEESVKHHLVSQMRSLENPFHQLQTKLSVAFPDKSLLQYDCGKLQKLAQLLQNLKDNGHRALIFTQMTKVLDILEQFLNFHGYLYMRLDGATKIEDRQILTERFNSDPRITVFILSSRSGGLGINLTGADTVIFYDSDWNPAMDKQCQDRCHRIGQTRDVHIYRFVSDHTIESNILKKANQKRHLDNVVIQTGDFTTDYFTKLSVKDLLGAEAPEDIPDDKPLLQDQKNLNKLLAQAEDEDDAKAAKSALREVNVDNEDFQEGSVAAQDGNSDNENNEDSEDEYGGTSHVEEYMVRFIANGFYY.

3 disordered regions span residues 61–94 (SLEQ…DKNN), 119–291 (CGRR…SLNT), and 304–323 (TSSS…QKKS). Composition is skewed to polar residues over residues 82-94 (ISGT…DKNN) and 152-173 (TVVT…SSPK). A compositionally biased stretch (basic and acidic residues) spans 179–192 (TADKKSKLNKRDSS). Positions 216–232 (SKARLKSSKAKSKKRAV) are enriched in basic residues. The segment covering 238–269 (LVRKQSPEIKNESKRTKADPTHTNDDGNDNRK) has biased composition (basic and acidic residues). Residues 282 to 291 (ESGLKTSLNT) are compositionally biased toward polar residues. The region spanning 424–496 (ISVYYKEQSK…EEKRKKNLAR (73 aa)) is the HSA domain. 3 disordered regions span residues 555–604 (TYPS…GNDM), 624–675 (FGNE…PGLS), and 694–749 (FDAD…AADP). Over residues 558 to 568 (SEASDASSEFS) the composition is skewed to low complexity. The segment covering 569–583 (ANEESDGNSDIDDEM) has biased composition (acidic residues). Residues 590-602 (DSDKEGNTERIGN) are compositionally biased toward basic and acidic residues. A compositionally biased stretch (low complexity) spans 643–657 (DSVSDSMEDSLSSSE). Residues 694-705 (FDADSSSDDGLD) show a composition bias toward acidic residues. Residues 726–737 (SDNELKDEKAET) show a composition bias toward basic and acidic residues. The Helicase ATP-binding domain maps to 777–942 (ASLYNNKTNG…WSLLYFLMPQ (166 aa)). 790-797 (DEMGLGKT) is an ATP binding site. Positions 893-896 (DEAH) match the DEAH box motif. The 151-residue stretch at 1314–1464 (KLAQLLQNLK…NVVIQTGDFT (151 aa)) folds into the Helicase C-terminal domain. Residues 1505 to 1556 (AEDEDDAKAAKSALREVNVDNEDFQEGSVAAQDGNSDNENNEDSEDEYGGTS) are disordered. Basic and acidic residues predominate over residues 1511 to 1522 (AKAAKSALREVN). Positions 1543–1552 (ENNEDSEDEY) are enriched in acidic residues.

Belongs to the SNF2/RAD54 helicase family. SWR1 subfamily. In terms of assembly, component of the SWR1 chromatin-remodeling complex.

Its subcellular location is the nucleus. It catalyses the reaction ATP + H2O = ADP + phosphate + H(+). Catalytic component of the SWR1 complex which mediates the ATP-dependent exchange of histone H2A for the H2A variant HZT1 leading to transcriptional regulation of selected genes by chromatin remodeling. This chain is Helicase SWR1 (SWR1), found in Kluyveromyces lactis (strain ATCC 8585 / CBS 2359 / DSM 70799 / NBRC 1267 / NRRL Y-1140 / WM37) (Yeast).